The sequence spans 461 residues: MLKIFNTLTRQKEEFKPIHAGEVGMYVCGITVYDLCHIGHGRTFVAFDVVARYLRFLGYKLKYVRNITDIDDKIIKRANENGESFVALVDRMIAEMHQDFDALNILRPDSEPRATHHIQEIIELTRTLIEKGHAYVADNGDVMFDVPTDPTYGQLSRQDLEQLQAGARVDVVDVKRNPMDFVLWKMSKEGEPSWPSPWGEGRPGWHIECSAMNCKQLGNHFDIHGGGSDLMFPHHENEIAQSTCAHDGEYVNYWMHSGMVMVDREKMSKSLGNFFTVRDVLKYYDAETVRYFLMSGHYRSQLNYSEENLKQARASLERLYTALRGTDKSAAPAGGEAFEARFVEAMNDDFNTPEAYSVLFDMAREVNRLKGEDMTAANAMASHLRKISGVLGLLEQEPDVFLQSGAQADDGEVAEIEALIQQRLDARKAKDWAAADAARDRLTEMGIILEDGPQGTTWRRK.

Cysteine 28 provides a ligand contact to Zn(2+). The 'HIGH' region motif lies at 30–40 (ITVYDLCHIGH). Zn(2+) is bound by residues cysteine 209, histidine 234, and glutamate 238. Residues 266–270 (KMSKS) carry the 'KMSKS' region motif. Lysine 269 is an ATP binding site.

This sequence belongs to the class-I aminoacyl-tRNA synthetase family. As to quaternary structure, monomer. Zn(2+) serves as cofactor.

The protein localises to the cytoplasm. It catalyses the reaction tRNA(Cys) + L-cysteine + ATP = L-cysteinyl-tRNA(Cys) + AMP + diphosphate. This chain is Cysteine--tRNA ligase, found in Salmonella dublin (strain CT_02021853).